A 545-amino-acid polypeptide reads, in one-letter code: E3 ubiquitin-protein ligase ipaH9.8 (545 aa).

Residues 1 to 242 (MLPINNNFSL…YHGPRIYFSM (242 aa)) form an interaction with target proteins region. LRR repeat units follow at residues 57–77 (NSDELRLDRLNLSSLPDNLPA), 78–99 (QITLLNVSYNQLTNLPELPVTL), 100–117 (KKLYSASNKLSELPVLPP), 118–139 (ALESLQVQHNELENLPALPDSL), 140–157 (LTMNISYNEIVSLPSLPQ), 158–179 (ALKNLRATRNFLTELPAFSEGN), 182–203 (VVREYFFDRNQISHIPESILNL), and 205–228 (NECSIHISDNPLSSHALQALQRLT). The segment at 243-250 (SDGQQNTL) is linker. Positions 251–545 (HRPLADAVTA…SENGSQLHHS (295 aa)) are E3 ubiquitin-protein ligase catalytic domain. Residues 253–545 (PLADAVTAWF…SENGSQLHHS (293 aa)) form the NEL domain. The Glycyl thioester intermediate role is filled by Cys-337.

It belongs to the LRR-containing bacterial E3 ligase family. Also interacts with human and mouse U2AF1 (U2AF35). Ubiquitinated in the presence of host E1 ubiquitin-activating enzyme, E2 ubiquitin-conjugating enzyme and ubiquitin.

It is found in the secreted. The protein resides in the host cytoplasm. The protein localises to the host nucleus. The catalysed reaction is S-ubiquitinyl-[E2 ubiquitin-conjugating enzyme]-L-cysteine + [acceptor protein]-L-lysine = [E2 ubiquitin-conjugating enzyme]-L-cysteine + N(6)-ubiquitinyl-[acceptor protein]-L-lysine.. Exists in an autoinhibited state in the absence of substrate protein, due to interactions of the leucine-rich repeats with NEL domain. Is activated upon binding to a substrate protein. In terms of biological role, effector E3 ubiquitin ligase that interferes with host's ubiquitination pathway and modulates the acute inflammatory responses, thus facilitating bacterial colonization within the host cell. Interacts with IKBKG (NEMO) and TNIP1 (ABIN-1), a ubiquitin-binding adapter protein, which results in TNIP1-dependent 'Lys-27'-linked polyubiquitination of IKBKG. Consequently, polyubiquitinated IKBKG undergoes proteasome-dependent degradation, which perturbs NF-kappa-B activation during bacterial infection. Mediates polyubiquitination of host U2AF1, leading to its proteasomal degradation. Catalyzes 'Lys-48'-linked polyubiquitination and subsequent degradation of a subset of host guanylate-binding proteins (GBP1, GBP2, GBP4 and GBP6), thereby suppressing host cell defense. In contrast, host GBP3 and GBP7 are not ubiquitinated by IpaH9.8. Uses UBE2D2 (UBCH5B) as an E2 ubiquitin-conjugating enzyme. The sequence is that of E3 ubiquitin-protein ligase ipaH9.8 (ipaH9.8) from Shigella boydii serotype 18 (strain CDC 3083-94 / BS512).